The primary structure comprises 132 residues: MKKTPLLNVALSRVIAGMGHGDILVIGDAGLPVPPGVELIDLAITPGLPDFASVLRVVLSELQVERHVLAEEMQKVVPPALVEIERLKGKLGKREWLTHEDFKVLSRSARAVVRTGECQPYSNIALISGVTF.

Histidine 20 acts as the Proton donor in catalysis. Substrate is bound by residues aspartate 28, histidine 99, and 121–123 (YSN).

The protein belongs to the RbsD / FucU family. RbsD subfamily. In terms of assembly, homodecamer.

The protein resides in the cytoplasm. The catalysed reaction is beta-D-ribopyranose = beta-D-ribofuranose. It participates in carbohydrate metabolism; D-ribose degradation; D-ribose 5-phosphate from beta-D-ribopyranose: step 1/2. Its function is as follows. Catalyzes the interconversion of beta-pyran and beta-furan forms of D-ribose. The sequence is that of D-ribose pyranase from Pseudomonas putida (strain ATCC 47054 / DSM 6125 / CFBP 8728 / NCIMB 11950 / KT2440).